A 564-amino-acid chain; its full sequence is Threonine--tRNA ligase (564 aa).

Positions 167–464 are catalytic; sequence DHRSLGKQLE…LLEKTSGNFP (298 aa). The Zn(2+) site is built by Cys260, His311, and His441.

The protein belongs to the class-II aminoacyl-tRNA synthetase family. Homodimer. Zn(2+) serves as cofactor.

The protein resides in the cytoplasm. It carries out the reaction tRNA(Thr) + L-threonine + ATP = L-threonyl-tRNA(Thr) + AMP + diphosphate + H(+). In terms of biological role, catalyzes the attachment of threonine to tRNA(Thr) in a two-step reaction: L-threonine is first activated by ATP to form Thr-AMP and then transferred to the acceptor end of tRNA(Thr). Also edits incorrectly charged L-seryl-tRNA(Thr). The polypeptide is Threonine--tRNA ligase (Mycoplasma genitalium (strain ATCC 33530 / DSM 19775 / NCTC 10195 / G37) (Mycoplasmoides genitalium)).